The chain runs to 206 residues: Ribosomal RNA small subunit methyltransferase G (206 aa).

S-adenosyl-L-methionine is bound by residues G74, L79, 125-126 (VE), and R140.

It belongs to the methyltransferase superfamily. RNA methyltransferase RsmG family.

The protein resides in the cytoplasm. It catalyses the reaction guanosine(527) in 16S rRNA + S-adenosyl-L-methionine = N(7)-methylguanosine(527) in 16S rRNA + S-adenosyl-L-homocysteine. Its function is as follows. Specifically methylates the N7 position of guanine in position 527 of 16S rRNA. This chain is Ribosomal RNA small subunit methyltransferase G, found in Shewanella sp. (strain ANA-3).